The primary structure comprises 405 residues: SPbeta prophage-derived uncharacterized protein YomR (405 aa).

The stretch at 9–36 (QLKQNNIQINSLRGSNDRAEKHMLEHEQ) forms a coiled coil.

This Bacillus subtilis (strain 168) protein is SPbeta prophage-derived uncharacterized protein YomR (yomR).